Consider the following 154-residue polypeptide: Ribosome maturation factor RimP (154 aa).

Belongs to the RimP family.

The protein localises to the cytoplasm. In terms of biological role, required for maturation of 30S ribosomal subunits. This is Ribosome maturation factor RimP from Yersinia pseudotuberculosis serotype O:1b (strain IP 31758).